The sequence spans 365 residues: UDP-N-acetylglucosamine--N-acetylmuramyl-(pentapeptide) pyrophosphoryl-undecaprenol N-acetylglucosamine transferase (365 aa).

Residues 20 to 22 (TGG), asparagine 132, arginine 168, serine 196, isoleucine 253, and glutamine 298 contribute to the UDP-N-acetyl-alpha-D-glucosamine site.

The protein belongs to the glycosyltransferase 28 family. MurG subfamily.

The protein resides in the cell inner membrane. It carries out the reaction di-trans,octa-cis-undecaprenyl diphospho-N-acetyl-alpha-D-muramoyl-L-alanyl-D-glutamyl-meso-2,6-diaminopimeloyl-D-alanyl-D-alanine + UDP-N-acetyl-alpha-D-glucosamine = di-trans,octa-cis-undecaprenyl diphospho-[N-acetyl-alpha-D-glucosaminyl-(1-&gt;4)]-N-acetyl-alpha-D-muramoyl-L-alanyl-D-glutamyl-meso-2,6-diaminopimeloyl-D-alanyl-D-alanine + UDP + H(+). The protein operates within cell wall biogenesis; peptidoglycan biosynthesis. Functionally, cell wall formation. Catalyzes the transfer of a GlcNAc subunit on undecaprenyl-pyrophosphoryl-MurNAc-pentapeptide (lipid intermediate I) to form undecaprenyl-pyrophosphoryl-MurNAc-(pentapeptide)GlcNAc (lipid intermediate II). This is UDP-N-acetylglucosamine--N-acetylmuramyl-(pentapeptide) pyrophosphoryl-undecaprenol N-acetylglucosamine transferase from Ralstonia nicotianae (strain ATCC BAA-1114 / GMI1000) (Ralstonia solanacearum).